A 275-amino-acid polypeptide reads, in one-letter code: NH(3)-dependent NAD(+) synthetase (275 aa).

Residue 46 to 53 (GISGGQDS) participates in ATP binding. Aspartate 52 lines the Mg(2+) pocket. Arginine 140 contributes to the deamido-NAD(+) binding site. Threonine 160 contributes to the ATP binding site. Position 165 (glutamate 165) interacts with Mg(2+). Lysine 173 and aspartate 180 together coordinate deamido-NAD(+). Lysine 189 and threonine 211 together coordinate ATP. 260–261 (HK) lines the deamido-NAD(+) pocket.

It belongs to the NAD synthetase family. In terms of assembly, homodimer.

The catalysed reaction is deamido-NAD(+) + NH4(+) + ATP = AMP + diphosphate + NAD(+) + H(+). It functions in the pathway cofactor biosynthesis; NAD(+) biosynthesis; NAD(+) from deamido-NAD(+) (ammonia route): step 1/1. Functionally, catalyzes the ATP-dependent amidation of deamido-NAD to form NAD. Uses ammonia as a nitrogen source. This Escherichia coli (strain K12 / MC4100 / BW2952) protein is NH(3)-dependent NAD(+) synthetase.